Here is a 412-residue protein sequence, read N- to C-terminus: Imidazolonepropionase (412 aa).

Positions 76 and 78 each coordinate Fe(3+). The Zn(2+) site is built by histidine 76 and histidine 78. Residues arginine 85, tyrosine 148, and histidine 181 each contribute to the 4-imidazolone-5-propanoate site. Tyrosine 148 is a binding site for N-formimidoyl-L-glutamate. Histidine 242 contacts Fe(3+). Histidine 242 is a Zn(2+) binding site. Residue glutamate 245 participates in 4-imidazolone-5-propanoate binding. Aspartate 317 is a Fe(3+) binding site. Aspartate 317 is a Zn(2+) binding site. N-formimidoyl-L-glutamate contacts are provided by asparagine 319 and glycine 321. Serine 322 lines the 4-imidazolone-5-propanoate pocket.

This sequence belongs to the metallo-dependent hydrolases superfamily. HutI family. Zn(2+) serves as cofactor. The cofactor is Fe(3+).

It localises to the cytoplasm. The catalysed reaction is 4-imidazolone-5-propanoate + H2O = N-formimidoyl-L-glutamate. The protein operates within amino-acid degradation; L-histidine degradation into L-glutamate; N-formimidoyl-L-glutamate from L-histidine: step 3/3. Functionally, catalyzes the hydrolytic cleavage of the carbon-nitrogen bond in imidazolone-5-propanoate to yield N-formimidoyl-L-glutamate. It is the third step in the universal histidine degradation pathway. The sequence is that of Imidazolonepropionase from Staphylococcus aureus (strain MSSA476).